We begin with the raw amino-acid sequence, 386 residues long: Succinate--CoA ligase [ADP-forming] subunit beta (386 aa).

Residues 9-244 enclose the ATP-grasp domain; sequence KAVLRSYGVS…LDEEDAKEIE (236 aa). ATP-binding positions include lysine 46, 53 to 55, glutamate 99, cysteine 102, and glutamate 107; that span reads GRG. Mg(2+)-binding residues include asparagine 199 and aspartate 213. Substrate is bound by residues asparagine 264 and 321–323; that span reads GIM.

It belongs to the succinate/malate CoA ligase beta subunit family. Heterotetramer of two alpha and two beta subunits. It depends on Mg(2+) as a cofactor.

The enzyme catalyses succinate + ATP + CoA = succinyl-CoA + ADP + phosphate. The catalysed reaction is GTP + succinate + CoA = succinyl-CoA + GDP + phosphate. It functions in the pathway carbohydrate metabolism; tricarboxylic acid cycle; succinate from succinyl-CoA (ligase route): step 1/1. Functionally, succinyl-CoA synthetase functions in the citric acid cycle (TCA), coupling the hydrolysis of succinyl-CoA to the synthesis of either ATP or GTP and thus represents the only step of substrate-level phosphorylation in the TCA. The beta subunit provides nucleotide specificity of the enzyme and binds the substrate succinate, while the binding sites for coenzyme A and phosphate are found in the alpha subunit. The chain is Succinate--CoA ligase [ADP-forming] subunit beta from Bacillus anthracis (strain A0248).